A 334-amino-acid chain; its full sequence is Glyceraldehyde-3-phosphate dehydrogenase (334 aa).

Residues 10–11, Asp-33, Lys-77, and Thr-119 each bind NAD(+); that span reads RI. Residues 149–151, Thr-180, 209–210, and Arg-232 contribute to the D-glyceraldehyde 3-phosphate site; these read SCT and TG. Cys-150 functions as the Nucleophile in the catalytic mechanism. Asn-314 lines the NAD(+) pocket.

This sequence belongs to the glyceraldehyde-3-phosphate dehydrogenase family. As to quaternary structure, homotetramer.

The protein resides in the cytoplasm. The catalysed reaction is D-glyceraldehyde 3-phosphate + phosphate + NAD(+) = (2R)-3-phospho-glyceroyl phosphate + NADH + H(+). The protein operates within carbohydrate degradation; glycolysis; pyruvate from D-glyceraldehyde 3-phosphate: step 1/5. Its function is as follows. Catalyzes the oxidative phosphorylation of glyceraldehyde 3-phosphate (G3P) to 1,3-bisphosphoglycerate (BPG) using the cofactor NAD. The first reaction step involves the formation of a hemiacetal intermediate between G3P and a cysteine residue, and this hemiacetal intermediate is then oxidized to a thioester, with concomitant reduction of NAD to NADH. The reduced NADH is then exchanged with the second NAD, and the thioester is attacked by a nucleophilic inorganic phosphate to produce BPG. The polypeptide is Glyceraldehyde-3-phosphate dehydrogenase (gap) (Chlamydia trachomatis serovar L2 (strain ATCC VR-902B / DSM 19102 / 434/Bu)).